We begin with the raw amino-acid sequence, 62 residues long: Photosystem II reaction center protein Z (62 aa).

2 helical membrane-spanning segments follow: residues 8 to 28 (AVFA…VVFA) and 41 to 61 (FSGT…NSLI).

This sequence belongs to the PsbZ family. As to quaternary structure, PSII is composed of 1 copy each of membrane proteins PsbA, PsbB, PsbC, PsbD, PsbE, PsbF, PsbH, PsbI, PsbJ, PsbK, PsbL, PsbM, PsbT, PsbY, PsbZ, Psb30/Ycf12, at least 3 peripheral proteins of the oxygen-evolving complex and a large number of cofactors. It forms dimeric complexes.

It localises to the plastid. The protein localises to the chloroplast thylakoid membrane. In terms of biological role, may control the interaction of photosystem II (PSII) cores with the light-harvesting antenna, regulates electron flow through the 2 photosystem reaction centers. PSII is a light-driven water plastoquinone oxidoreductase, using light energy to abstract electrons from H(2)O, generating a proton gradient subsequently used for ATP formation. This chain is Photosystem II reaction center protein Z, found in Calycanthus floridus var. glaucus (Eastern sweetshrub).